A 270-amino-acid polypeptide reads, in one-letter code: Undecaprenyl-diphosphatase 1 (270 aa).

Helical transmembrane passes span 5–25 (YYILKYLILGLFQGLTEPIPI), 42–62 (IEGFSFELLVNSASLLAVLLI), 89–109 (FFFIIYLVIATIPAGVIGVLF), 117–137 (LKGVKMVGISLLITAVGLWII), 192–212 (FSFLLYIPVSLGGLLLSITDI), 220–240 (TLFVPYIVAFIATFIMTYISL), and 250–270 (GNLKYFSFYCIIVGVLTLIFL).

It belongs to the UppP family.

It is found in the cell membrane. It carries out the reaction di-trans,octa-cis-undecaprenyl diphosphate + H2O = di-trans,octa-cis-undecaprenyl phosphate + phosphate + H(+). Its function is as follows. Catalyzes the dephosphorylation of undecaprenyl diphosphate (UPP). Confers resistance to bacitracin. In Bacillus cereus (strain ATCC 10987 / NRS 248), this protein is Undecaprenyl-diphosphatase 1.